The following is a 462-amino-acid chain: N-myc proto-oncogene protein (462 aa).

Positions 19–47 (LEFDSLQPCFYPDEDDFYFGGPDSTPPGE) are interaction with AURKA. Residues 61 to 90 (LSPSRAFPEHSPEPSNWATEMLLPEADLWG) are interaction with AURKA and FBXW7. Positions 76-85 (NWATEMLLPE) match the 9aaTAD motif. 3 disordered regions span residues 134–177 (KLQH…ATLP), 232–289 (AAPA…SSNN), and 332–390 (APSP…LERQ). Low complexity-rich tracts occupy residues 143-176 (GVSS…GATL) and 232-244 (AAPA…PASS). Residues 257–276 (TLSDSDDEDDEEEDEEEEID) are compositionally biased toward acidic residues. Phosphoserine; by CK2 occurs at positions 259 and 261. The region spanning 379-431 (ERRRNHNILERQRRNDLRSSFLTLRDHVPELVKNEKAAKVVILKKATEYVHAL) is the bHLH domain. The leucine-zipper stretch occupies residues 431–452 (LQANEHQLLLEKEKLQARQQQL).

Efficient DNA binding requires dimerization with another bHLH protein. Binds DNA as a heterodimer with MAX. Interacts with KDM5A, KDM5B and HUWE1. Interacts with MYCNOS. Interacts with AURKA; interaction is phospho-independent and triggers AURKA activation; AURKA competes with FBXW7 for binding to unphosphorylated MYCN but not for binding to unphosphorylated MYCN. Interacts with FBXW7; FBXW7 competes with AURKA for binding to unphosphorylated MYCN but not for binding to phosphorylated MYCN. Post-translationally, phosphorylated by GSK3-beta which may promote its degradation. Phosphorylated by AURKA.

Its subcellular location is the nucleus. Its function is as follows. Positively regulates the transcription of MYCNOS in neuroblastoma cells. This is N-myc proto-oncogene protein (Mycn) from Mus musculus (Mouse).